The following is a 531-amino-acid chain: MGKMRVRFPTLVLVLGIVFLMAVSIGIAYGEKDVLKSHERPEEREQEEWQPRRQRPQSRREEREQEQEQGSPSYPRRQSGYERRQYHERSEQREEREQEQQQGSPSYSRRQRNPYHFNSQRFQTLYKNRNGKIRVLERFDQRTNRLENLQNYRIVEFQSKPNTLILPKHSDADYVLVVLNGRATITIVNPDRRQAYNLEYGDALRIPAGSTSYILNPDDNQKLRVVKLAIPINNPGYFYDFYPSSTKDQQSYFSGFSRNTLEATFNTRYEEIQRILLGNEDEQEYEEQRRGQEQSHQDEGVIVRVSREQIQELTKYAQSSSGKDKPSQSGPFNLRSNEPIYSNKYGNFYEITPDRNPQVQDLDISLTFTEINEGALLLPHYNSKAIFIVVVGEGNGKYELVGIRDQQRQQDEQEEEPEEVRRYSARLSEGDIFVIPAGYPISVNASSNLRLLGFGINAYENQRNFLAGSEDNVIRQLDREVKELTFPGSAEDIERLIKNQQQSYFANALPQQQQQSEKEGRRGRRGPISSI.

Positions 1-30 are cleaved as a signal peptide; sequence MGKMRVRFPTLVLVLGIVFLMAVSIGIAYG. Positions 31-108 are excised as a propeptide; sequence EKDVLKSHER…EQQQGSPSYS (78 aa). Basic and acidic residues-rich tracts occupy residues 37-51 and 79-99; these read SHERPEEREQEEWQP and SGYERRQYHERSEQREEREQE. Disordered stretches follow at residues 37–124, 283–302, and 314–337; these read SHER…RFQT, QEYEEQRRGQEQSHQDEGVI, and TKYAQSSSGKDKPSQSGPFNLRSN. The region spanning 115-273 is the Cupin type-1 1 domain; sequence YHFNSQRFQT…TFNTRYEEIQ (159 aa). Over residues 286–302 the composition is skewed to basic and acidic residues; sequence EEQRRGQEQSHQDEGVI. Residues 316 to 337 show a composition bias toward polar residues; it reads YAQSSSGKDKPSQSGPFNLRSN. One can recognise a Cupin type-1 2 domain in the interval 332–494; it reads FNLRSNEPIY…TFPGSAEDIE (163 aa). N-linked (GlcNAc...) asparagine glycosylation is present at Asn-444. Positions 508–531 are disordered; the sequence is ALPQQQQQSEKEGRRGRRGPISSI.

It belongs to the 7S seed storage protein family.

Seed storage protein. Accumulates during seed development and is hydrolyzed after germination to provide a carbon and nitrogen source for the developing seedling. Its function is as follows. Has a lectin-like activity. This Lupinus albus (White lupine) protein is Conglutin beta 1.